A 204-amino-acid polypeptide reads, in one-letter code: UPF0056 membrane protein TC_0241 (204 aa).

6 helical membrane passes run 8-28, 46-66, 68-88, 107-127, 138-158, and 176-196; these read LTLL…FVAL, IFAL…FRLL, VSLP…AINM, IFYP…STLG, LVLG…FFSS, and FGIS…STAF.

This sequence belongs to the UPF0056 (MarC) family.

Its subcellular location is the cell membrane. The protein is UPF0056 membrane protein TC_0241 of Chlamydia muridarum (strain MoPn / Nigg).